A 212-amino-acid polypeptide reads, in one-letter code: Inactive ribonuclease-like protein 10 (212 aa).

The signal sequence occupies residues 1-24 (MKLTLVQIFFMMLLLLLGLGVGLG).

The protein belongs to the pancreatic ribonuclease family. The N-terminus is blocked. Glycosylated. In terms of tissue distribution, male-specific expression in proximal caput of the epididymis.

It is found in the secreted. Its function is as follows. Secreted proximal epididymal protein required for post-testicular sperm maturation and male fertility. May be involved in sperm adhesion to the egg zona pellucida. Does not have ribonuclease activity. This chain is Inactive ribonuclease-like protein 10 (RNASE10), found in Ovis aries (Sheep).